The chain runs to 381 residues: L-lactate dehydrogenase (381 aa).

Positions 1 to 380 (MIISSASDYR…KPEALVDLSK (380 aa)) constitute an FMN hydroxy acid dehydrogenase domain. Tyrosine 24 contributes to the substrate binding site. The FMN site is built by serine 106 and glutamine 127. Tyrosine 129 contributes to the substrate binding site. Threonine 155 lines the FMN pocket. Substrate is bound at residue arginine 164. FMN is bound at residue lysine 251. Histidine 275 acts as the Proton acceptor in catalysis. A substrate-binding site is contributed by arginine 278. An FMN-binding site is contributed by 306-330 (DSGIRNGLDIVRMLALGADATMLGR).

This sequence belongs to the FMN-dependent alpha-hydroxy acid dehydrogenase family. FMN serves as cofactor.

The protein resides in the cell inner membrane. The enzyme catalyses (S)-lactate + A = pyruvate + AH2. In terms of biological role, catalyzes the conversion of L-lactate to pyruvate. Is coupled to the respiratory chain. This is L-lactate dehydrogenase from Haemophilus influenzae (strain 86-028NP).